The following is a 173-amino-acid chain: Adenine phosphoribosyltransferase (173 aa).

It belongs to the purine/pyrimidine phosphoribosyltransferase family. In terms of assembly, homodimer.

It localises to the cytoplasm. The catalysed reaction is AMP + diphosphate = 5-phospho-alpha-D-ribose 1-diphosphate + adenine. It functions in the pathway purine metabolism; AMP biosynthesis via salvage pathway; AMP from adenine: step 1/1. Its function is as follows. Catalyzes a salvage reaction resulting in the formation of AMP, that is energically less costly than de novo synthesis. The sequence is that of Adenine phosphoribosyltransferase from Thermoanaerobacter pseudethanolicus (strain ATCC 33223 / 39E) (Clostridium thermohydrosulfuricum).